A 187-amino-acid chain; its full sequence is Large ribosomal subunit protein uL5 (187 aa).

The protein belongs to the universal ribosomal protein uL5 family. In terms of assembly, part of the 50S ribosomal subunit; part of the 5S rRNA/L5/L18/L25 subcomplex. Contacts the 5S rRNA and the P site tRNA. Forms a bridge to the 30S subunit in the 70S ribosome.

In terms of biological role, this is one of the proteins that bind and probably mediate the attachment of the 5S RNA into the large ribosomal subunit, where it forms part of the central protuberance. In the 70S ribosome it contacts protein S13 of the 30S subunit (bridge B1b), connecting the 2 subunits; this bridge is implicated in subunit movement. Contacts the P site tRNA; the 5S rRNA and some of its associated proteins might help stabilize positioning of ribosome-bound tRNAs. The polypeptide is Large ribosomal subunit protein uL5 (Gluconobacter oxydans (strain 621H) (Gluconobacter suboxydans)).